The sequence spans 609 residues: CTTNBP2 N-terminal-like protein (609 aa).

Residues 1–10 show a composition bias toward polar residues; it reads MEQNSNSSVA. The interval 1 to 29 is disordered; sequence MEQNSNSSVADTFAEAPATDADYGTENCS. Coiled coils occupy residues 182–264 and 303–370; these read RMVN…QKQI and IAEG…QQLG. A disordered region spans residues 556–584; the sequence is PPAGARGAPPPIPTKPIVPPKREPSLSRL. Pro residues predominate over residues 563 to 574; that stretch reads APPPIPTKPIVP. At Ser586 the chain carries Phosphoserine.

Its subcellular location is the cell projection. It is found in the lamellipodium. It localises to the cytoplasm. The protein resides in the cytoskeleton. The protein localises to the stress fiber. Its function is as follows. Regulates lamellipodial actin dynamics in a Cortactin-dependent manner and is therefore likely involved in controlling actin branch density, actin-retrograde flow rates and lamellipodial protrusion. Functions by slowing the dissociation of Cortactin from Arp2/3 nucleated branches thereby increasing branch nucleation and junction stability. Associates with core striatin-interacting phosphatase and kinase (STRIPAK) complex to form CTTNBP2NL-STRIPAK complexes. STRIPAK complexes have critical roles in protein (de)phosphorylation and are regulators of multiple signaling pathways including Hippo, MAPK, nuclear receptor and cytoskeleton remodeling. Different types of STRIPAK complexes are involved in a variety of biological processes such as cell growth, differentiation, apoptosis, metabolism and immune regulation. The protein is CTTNBP2 N-terminal-like protein of Drosophila melanogaster (Fruit fly).